We begin with the raw amino-acid sequence, 228 residues long: Phosphoglycolate phosphatase (228 aa).

Residue Asp-12 is the Nucleophile of the active site. Mg(2+)-binding residues include Asp-12, Asp-14, and Asp-177.

It belongs to the HAD-like hydrolase superfamily. CbbY/CbbZ/Gph/YieH family. It depends on Mg(2+) as a cofactor.

The catalysed reaction is 2-phosphoglycolate + H2O = glycolate + phosphate. It participates in organic acid metabolism; glycolate biosynthesis; glycolate from 2-phosphoglycolate: step 1/1. Its function is as follows. Specifically catalyzes the dephosphorylation of 2-phosphoglycolate. Is involved in the dissimilation of the intracellular 2-phosphoglycolate formed during the DNA repair of 3'-phosphoglycolate ends, a major class of DNA lesions induced by oxidative stress. The sequence is that of Phosphoglycolate phosphatase from Vibrio parahaemolyticus serotype O3:K6 (strain RIMD 2210633).